The primary structure comprises 338 residues: MRIGIVNDSALAVAALRRALALDTTLEIAWIAGDGEEAVRMAATQTPDLILMDLLMPVMDGVEATRRIMAESPCAIVVVTMDLGRNANQVFDAMGHGAIDAVDTPTLTDSDTKLAAGPLLRKIRNIARLLGGRGQAPHPLAAATPTPTAPRLVAIGASAGGPAALATLLGALPADFGAAVVAVQHVDEAFAQGMAEWLDAQCQLPVRLARAGEVPQAGAVVLAGTNDHLRLTSAGRLIYTPDPCDYLYRPSIDVFFESVVEHWRGEAIGVLLTGMGRDGAQGLKAMRERGFQTIAQDQATSAVYGMPKAAATLGAASEILPLQKIAPRLVMTCGGGRR.

The 118-residue stretch at 2 to 119 (RIGIVNDSAL…SDTKLAAGPL (118 aa)) folds into the Response regulatory domain. Residue aspartate 53 is modified to 4-aspartylphosphate. A CheB-type methylesterase domain is found at 145–330 (PTPTAPRLVA…PLQKIAPRLV (186 aa)). Catalysis depends on residues serine 158, histidine 185, and aspartate 278.

It belongs to the CheB family. Phosphorylated by CheA. Phosphorylation of the N-terminal regulatory domain activates the methylesterase activity.

The protein localises to the cytoplasm. The catalysed reaction is [protein]-L-glutamate 5-O-methyl ester + H2O = L-glutamyl-[protein] + methanol + H(+). It carries out the reaction L-glutaminyl-[protein] + H2O = L-glutamyl-[protein] + NH4(+). Functionally, involved in chemotaxis. Part of a chemotaxis signal transduction system that modulates chemotaxis in response to various stimuli. Catalyzes the demethylation of specific methylglutamate residues introduced into the chemoreceptors (methyl-accepting chemotaxis proteins or MCP) by CheR. Also mediates the irreversible deamidation of specific glutamine residues to glutamic acid. The sequence is that of Protein-glutamate methylesterase/protein-glutamine glutaminase 2 from Cupriavidus metallidurans (strain ATCC 43123 / DSM 2839 / NBRC 102507 / CH34) (Ralstonia metallidurans).